The chain runs to 833 residues: Mannosyl-oligosaccharide glucosidase (833 aa).

The Cytoplasmic segment spans residues 1–10 (MLISKSKMFK). Residues 11–28 (TFWILTSIVLLASATVDI) form a helical; Signal-anchor for type II membrane protein membrane-spanning segment. Residues 29–833 (SKLQEFEEYQ…ALVVNILGRF (805 aa)) lie on the Lumenal side of the membrane. Substrate-binding residues include Asn-42 and Asn-122. N-linked (GlcNAc...) asparagine glycans are attached at residues Asn-42, Asn-122, and Asn-135. Residue Glu-143 coordinates substrate. Asp-601 serves as the catalytic Proton donor. A disulfide bridge links Cys-669 with Cys-685. Residue Asn-787 is glycosylated (N-linked (GlcNAc...) asparagine). Glu-804 serves as the catalytic Proton acceptor.

This sequence belongs to the glycosyl hydrolase 63 family. N-glycosylated.

The protein localises to the endoplasmic reticulum membrane. It catalyses the reaction N(4)-(alpha-D-Glc-(1-&gt;2)-alpha-D-Glc-(1-&gt;3)-alpha-D-Glc-(1-&gt;3)-alpha-D-Man-(1-&gt;2)-alpha-D-Man-(1-&gt;2)-alpha-D-Man-(1-&gt;3)-[alpha-D-Man-(1-&gt;2)-alpha-D-Man-(1-&gt;3)-[alpha-D-Man-(1-&gt;2)-alpha-D-Man-(1-&gt;6)]-alpha-D-Man-(1-&gt;6)]-beta-D-Man-(1-&gt;4)-beta-D-GlcNAc-(1-&gt;4)-beta-D-GlcNAc)-L-asparaginyl-[protein] + H2O = N(4)-(alpha-D-Glc-(1-&gt;3)-alpha-D-Glc-(1-&gt;3)-alpha-D-Man-(1-&gt;2)-alpha-D-Man-(1-&gt;2)-alpha-D-Man-(1-&gt;3)-[alpha-D-Man-(1-&gt;2)-alpha-D-Man-(1-&gt;3)-[alpha-D-Man-(1-&gt;2)-alpha-D-Man-(1-&gt;6)]-alpha-D-Man-(1-&gt;6)]-beta-D-Man-(1-&gt;4)-beta-D-GlcNAc-(1-&gt;4)-beta-D-GlcNAc)-L-asparaginyl-[protein] + beta-D-glucose. It participates in glycan metabolism; N-glycan degradation. Its activity is regulated as follows. Miglitol is an effective inhibitor at 1 mM. In terms of biological role, cleaves the distal alpha 1,2-linked glucose residue from the Glc(3)Man(9)GlcNAc(2) oligosaccharide precursor highly specifically. Seems to play a role in beta-1,6-glucan synthesis. The sequence is that of Mannosyl-oligosaccharide glucosidase (CWH41) from Saccharomyces cerevisiae (strain ATCC 204508 / S288c) (Baker's yeast).